Reading from the N-terminus, the 343-residue chain is Zinc finger CCCH domain-containing protein 39 (343 aa).

The stretch at 114–147 (LSHLADAADEAAALRQENAELRVANNDLACRIAK) forms a coiled coil. C3H1-type zinc fingers lie at residues 268-296 (MFKTELCNKWEETGACPYGDQCQFAHGVA) and 306-334 (RYKTQVCRMVLAGGVCPYGHRCHFRHSIT).

This chain is Zinc finger CCCH domain-containing protein 39, found in Oryza sativa subsp. japonica (Rice).